The chain runs to 302 residues: m7GpppN-mRNA hydrolase NUDT17 (302 aa).

The region spanning 89–237 (GRGVDLGVAV…DGTETPKHLP (149 aa)) is the Nudix hydrolase domain. The Nudix box signature appears at 128–149 (GHVEPDEELLDGGLRELWEESG). Residues glutamate 143 and glutamate 147 each coordinate Mg(2+).

Belongs to the Nudix hydrolase family. Mg(2+) serves as cofactor. Requires Mn(2+) as cofactor.

The enzyme catalyses a 5'-end (N(7)-methyl 5'-triphosphoguanosine)-ribonucleoside in mRNA + H2O = N(7)-methyl-GDP + a 5'-end phospho-ribonucleoside in mRNA + 2 H(+). In terms of biological role, acts as a decapping enzyme capable of hydrolyzing monomethylated capped RNAs (in vitro). Hydrolyzes monomethylated capped RNA after alpha and beta phosphates to form N(7)-methyl-GDP. Shows low activity towards unmethylated capped RNA. The polypeptide is m7GpppN-mRNA hydrolase NUDT17 (NUDT17) (Bos taurus (Bovine)).